The primary structure comprises 1785 residues: Mellein synthase (1785 aa).

Residues 1–36 are disordered; the sequence is MATPDDPATPALSLSASNSSSPTAASSVPPPTGTSE. Over residues 8 to 27 the composition is skewed to low complexity; sequence ATPALSLSASNSSSPTAASS. The 426-residue stretch at 39-464 folds into the Ketosynthase family 3 (KS3) domain; it reads YDDVAIIGMS…GTVSHAIIEQ (426 aa). Catalysis depends on for beta-ketoacyl synthase activity residues cysteine 211, histidine 346, and histidine 386. The segment at 575–888 is malonyl-CoA:ACP transacylase (MAT) domain; sequence VWVFSGHGSH…AVAQLWTKGV (314 aa). The active-site For malonyltransferase activity is the serine 661. Residues 933 to 1047 are N-terminal hotdog fold; the sequence is NNMLGQRMVV…ASWENEPSAN (115 aa). The PKS/mFAS DH domain maps to 933–1206; sequence NNMLGQRMVV…FTEVEATPTK (274 aa). The segment at 935 to 1203 is dehydratase (DH) domain; the sequence is MLGQRMVVAG…SIRFTEVEAT (269 aa). The Proton acceptor; for dehydratase activity role is filled by histidine 965. The C-terminal hotdog fold stretch occupies residues 1062–1206; the sequence is GTRVSETFSV…FTEVEATPTK (145 aa). The active-site Proton donor; for dehydratase activity is aspartate 1123. A ketoreductase (KR) domain region spans residues 1418-1608; it reads GTYVLTGGLG…AIAFQWTAWR (191 aa). Polar residues predominate over residues 1681-1698; it reads QDQSAPASGNASDSSGRP. Positions 1681–1701 are disordered; sequence QDQSAPASGNASDSSGRPTAS. A Carrier domain is found at 1706–1781; that stretch reads PWLDVKIREC…AMVGWFQKQF (76 aa). Serine 1741 is subject to O-(pantetheine 4'-phosphoryl)serine.

It participates in secondary metabolite biosynthesis. In terms of biological role, polyketide synthase that produces (R)-mellein, a secondary metabolite that inhibits the germination of wheat (Triticum aestivum) and barrel medic (Medicago truncatula) seeds. Condensates 1 acetate starter unit and 4 extender malonate units. The nascent pentaketide intermediate then undergoes an aldol cyclization and is aromatized via dehydration. The (R)-O-methylmellein isolated from P.nodorum is most likely to be derived from (R)-mellein via an additional methylation at the hydroxyl group. Interestingly, no O-methyltransferase gene is encoded in the vicinity of MLNS on the chromosome. Thus, the O-methylation is likely to be catalyzed by an endogenous O-methyltransferase encoded elsewhere in the genome of P.nodorum. This Phaeosphaeria nodorum (strain SN15 / ATCC MYA-4574 / FGSC 10173) (Glume blotch fungus) protein is Mellein synthase.